A 178-amino-acid polypeptide reads, in one-letter code: Extracellular fatty acid-binding protein (178 aa).

A signal peptide spans methionine 1–alanine 20. Threonine 43 contacts enterobactin. The 1-tetradecanoyl-sn-glycerol 3-phosphate site is built by tyrosine 72 and lysine 104. Residues cysteine 80 and cysteine 173 are joined by a disulfide bond. Enterobactin is bound by residues lysine 104, arginine 123, and arginine 134. Residue arginine 134–tyrosine 136 participates in 1-tetradecanoyl-sn-glycerol 3-phosphate binding.

It belongs to the calycin superfamily. Lipocalin family. As to quaternary structure, monomer.

It is found in the secreted. In terms of biological role, siderocalin-like lipocalin tightly binding a variety of bacterial ferric siderophores, also binds long-chain unsaturated fatty acids such as linoleic acid, oleic acid, arachidonic acid and, with a lower affinity, long chain saturated fatty acids such as steraic acid. May act as an antibacterial factor, through dual ligand specificity, both as a siderophore-sequestrating molecule and a lysophosphatidic acid (LPA) sensor. This chain is Extracellular fatty acid-binding protein, found in Coturnix japonica (Japanese quail).